The primary structure comprises 416 residues: Serine carboxypeptidase S10 family member 1 (416 aa).

The signal sequence occupies residues 1 to 20 (MMKLLFIIISIIFVINVSNS). Residues N33 and N84 are each glycosylated (N-linked (GlcNAc...) asparagine). S156 is an active-site residue. 3 N-linked (GlcNAc...) asparagine glycosylation sites follow: N235, N273, and N295. The active site involves D338. N385 carries N-linked (GlcNAc...) asparagine glycosylation. H396 is an active-site residue.

It belongs to the peptidase S10 family.

Its subcellular location is the secreted. Its function is as follows. Probable carboxypeptidase. This is Serine carboxypeptidase S10 family member 1 from Dictyostelium discoideum (Social amoeba).